The chain runs to 207 residues: Large ribosomal subunit protein uL4 (207 aa).

The segment at 45-80 (RQGTHAVKNRSEVRGGGRKPWRQKGTGRARQGSTRS) is disordered. A compositionally biased stretch (basic residues) spans 60 to 71 (GGRKPWRQKGTG).

It belongs to the universal ribosomal protein uL4 family. In terms of assembly, part of the 50S ribosomal subunit.

One of the primary rRNA binding proteins, this protein initially binds near the 5'-end of the 23S rRNA. It is important during the early stages of 50S assembly. It makes multiple contacts with different domains of the 23S rRNA in the assembled 50S subunit and ribosome. Functionally, forms part of the polypeptide exit tunnel. The protein is Large ribosomal subunit protein uL4 of Oceanobacillus iheyensis (strain DSM 14371 / CIP 107618 / JCM 11309 / KCTC 3954 / HTE831).